We begin with the raw amino-acid sequence, 159 residues long: Phosphopantetheine adenylyltransferase (159 aa).

Ser10 serves as a coordination point for substrate. Residues 10-11 (SF) and His18 each bind ATP. Residues Lys42, Leu77, and Lys91 each coordinate substrate. ATP contacts are provided by residues 92–94 (GIR), Glu102, and 126–132 (NAHVSSS).

The protein belongs to the bacterial CoaD family. As to quaternary structure, homohexamer. Requires Mg(2+) as cofactor.

It is found in the cytoplasm. It catalyses the reaction (R)-4'-phosphopantetheine + ATP + H(+) = 3'-dephospho-CoA + diphosphate. Its pathway is cofactor biosynthesis; coenzyme A biosynthesis; CoA from (R)-pantothenate: step 4/5. Reversibly transfers an adenylyl group from ATP to 4'-phosphopantetheine, yielding dephospho-CoA (dPCoA) and pyrophosphate. The protein is Phosphopantetheine adenylyltransferase of Leifsonia xyli subsp. xyli (strain CTCB07).